The chain runs to 173 residues: Alpha-crystallin A chain (173 aa).

The residue at position 1 (Met-1) is an N-acetylmethionine. Positions 1 to 63 (MDVTIQHPWF…RTVLDSGISE (63 aa)) are required for complex formation with BFSP1 and BFSP2. At Gln-6 the chain carries Deamidated glutamine; partial. Ser-45 carries the post-translational modification Phosphoserine. Deamidated glutamine; partial is present on residues Gln-50 and Gln-90. The 111-residue stretch at 52–162 (LFRTVLDSGI…SHSERAIPVS (111 aa)) folds into the sHSP domain. At Lys-99 the chain carries N6-acetyllysine. His-100 is a Zn(2+) binding site. Deamidated asparagine; partial is present on Asn-101. 2 residues coordinate Zn(2+): Glu-102 and His-107. Ser-122 is subject to Phosphoserine. A Deamidated asparagine; partial modification is found at Asn-123. A disulfide bridge connects residues Cys-131 and Cys-142. The residue at position 147 (Gln-147) is a Deamidated glutamine; partial. Positions 149 to 173 (GMDASHSERAIPVSREEKPSSAPSS) are disordered. Positions 153 to 167 (SHSERAIPVSREEKP) are enriched in basic and acidic residues. His-154 serves as a coordination point for Zn(2+). Ser-162 is a glycosylation site (O-linked (GlcNAc) serine).

The protein belongs to the small heat shock protein (HSP20) family. In terms of assembly, heteromer composed of three CRYAA and one CRYAB subunits. Inter-subunit bridging via zinc ions enhances stability, which is crucial as there is no protein turn over in the lens. Can also form homodimers and homotetramers (dimers of dimers) which serve as the building blocks of homooligomers. Within homooligomers, the zinc-binding motif is created from residues of 3 different molecules. His-100 and Glu-102 from one molecule are ligands of the zinc ion, and His-107 and His-154 residues from additional molecules complete the site with tetrahedral coordination geometry. Part of a complex required for lens intermediate filament formation composed of BFSP1, BFSP2 and CRYAA. Post-translationally, undergoes age-dependent proteolytical cleavage at the C-terminus.

It localises to the cytoplasm. Its subcellular location is the nucleus. Contributes to the transparency and refractive index of the lens. In its oxidized form (absence of intramolecular disulfide bond), acts as a chaperone, preventing aggregation of various proteins under a wide range of stress conditions. Required for the correct formation of lens intermediate filaments as part of a complex composed of BFSP1, BFSP2 and CRYAA. This Loxodonta africana (African elephant) protein is Alpha-crystallin A chain (CRYAA).